We begin with the raw amino-acid sequence, 1094 residues long: Protein phosphatase 2C and cyclic nucleotide-binding/kinase domain-containing protein (1094 aa).

Residues 107 to 397 (RCSFLSQRGY…DDITIIVVHI (291 aa)) enclose the PPM-type phosphatase domain. Residues aspartate 148, glycine 149, aspartate 344, and aspartate 388 each contribute to the Mn(2+) site. A nucleoside 3',5'-cyclic phosphate is bound by residues 491 to 616 (LFRK…RSVD) and 617 to 758 (LLSR…RHSS). The Protein kinase domain occupies 785-1038 (TTCLSTTDCS…PESIKKHPWF (254 aa)). ATP contacts are provided by residues 791-799 (TDCSEIGLV) and lysine 811.

In the N-terminal section; belongs to the PP2C family. This sequence in the C-terminal section; belongs to the protein kinase superfamily. AGC Ser/Thr protein kinase family. Requires Mg(2+) as cofactor. The cofactor is Mn(2+).

The enzyme catalyses O-phospho-L-seryl-[protein] + H2O = L-seryl-[protein] + phosphate. It carries out the reaction O-phospho-L-threonyl-[protein] + H2O = L-threonyl-[protein] + phosphate. This chain is Protein phosphatase 2C and cyclic nucleotide-binding/kinase domain-containing protein, found in Arabidopsis thaliana (Mouse-ear cress).